The following is a 486-amino-acid chain: Cardiolipin synthase A (486 aa).

2 helical membrane passes run 3-23 (TVYTLVSWLAILGYWLLIAGV) and 38-58 (MAWLLIIYILPLVGIIAYLAV). PLD phosphodiesterase domains follow at residues 219–246 (MDLRQHRKMIMIDNYIAYTGSMNMVDPR) and 399–426 (EGGLLHTKSVLVDGELSLVGTVNLDMRS). Catalysis depends on residues H224, K226, D231, H404, K406, and D411.

The protein belongs to the phospholipase D family. Cardiolipin synthase subfamily. ClsA sub-subfamily.

The protein localises to the cell inner membrane. It catalyses the reaction 2 a 1,2-diacyl-sn-glycero-3-phospho-(1'-sn-glycerol) = a cardiolipin + glycerol. Its function is as follows. Catalyzes the reversible phosphatidyl group transfer from one phosphatidylglycerol molecule to another to form cardiolipin (CL) (diphosphatidylglycerol) and glycerol. The protein is Cardiolipin synthase A of Escherichia coli O157:H7 (strain EC4115 / EHEC).